The sequence spans 214 residues: 3,4-dihydroxy-2-butanone 4-phosphate synthase (214 aa).

Residues 40-41 (RE), D45, 153-157 (RRGHT), and E177 each bind D-ribulose 5-phosphate. E41 contributes to the Mg(2+) binding site. H156 serves as a coordination point for Mg(2+).

This sequence belongs to the DHBP synthase family. As to quaternary structure, homodimer. The cofactor is Mg(2+). Requires Mn(2+) as cofactor.

It carries out the reaction D-ribulose 5-phosphate = (2S)-2-hydroxy-3-oxobutyl phosphate + formate + H(+). The protein operates within cofactor biosynthesis; riboflavin biosynthesis; 2-hydroxy-3-oxobutyl phosphate from D-ribulose 5-phosphate: step 1/1. Functionally, catalyzes the conversion of D-ribulose 5-phosphate to formate and 3,4-dihydroxy-2-butanone 4-phosphate. The sequence is that of 3,4-dihydroxy-2-butanone 4-phosphate synthase from Rhodospirillum rubrum (strain ATCC 11170 / ATH 1.1.1 / DSM 467 / LMG 4362 / NCIMB 8255 / S1).